Here is a 304-residue protein sequence, read N- to C-terminus: 4-diphosphocytidyl-2-C-methyl-D-erythritol kinase (304 aa).

Lys-20 is a catalytic residue. 106–116 serves as a coordination point for ATP; sequence PVASGIGGGSG. Residue Asp-148 is part of the active site.

Belongs to the GHMP kinase family. IspE subfamily.

It carries out the reaction 4-CDP-2-C-methyl-D-erythritol + ATP = 4-CDP-2-C-methyl-D-erythritol 2-phosphate + ADP + H(+). It functions in the pathway isoprenoid biosynthesis; isopentenyl diphosphate biosynthesis via DXP pathway; isopentenyl diphosphate from 1-deoxy-D-xylulose 5-phosphate: step 3/6. Functionally, catalyzes the phosphorylation of the position 2 hydroxy group of 4-diphosphocytidyl-2C-methyl-D-erythritol. The polypeptide is 4-diphosphocytidyl-2-C-methyl-D-erythritol kinase (Bartonella bacilliformis (strain ATCC 35685 / KC583 / Herrer 020/F12,63)).